The primary structure comprises 91 residues: UPF0250 protein NGO_0791 (91 aa).

Belongs to the UPF0250 family.

The polypeptide is UPF0250 protein NGO_0791 (Neisseria gonorrhoeae (strain ATCC 700825 / FA 1090)).